The chain runs to 172 residues: NAD(P)H-quinone oxidoreductase subunit I, chloroplastic (172 aa).

4Fe-4S ferredoxin-type domains follow at residues 55-84 (GRIH…VDWK) and 95-124 (LNYS…MTEE). [4Fe-4S] cluster is bound by residues cysteine 64, cysteine 67, cysteine 70, cysteine 74, cysteine 104, cysteine 107, cysteine 110, and cysteine 114.

It belongs to the complex I 23 kDa subunit family. NDH is composed of at least 16 different subunits, 5 of which are encoded in the nucleus. [4Fe-4S] cluster serves as cofactor.

The protein resides in the plastid. Its subcellular location is the chloroplast thylakoid membrane. It catalyses the reaction a plastoquinone + NADH + (n+1) H(+)(in) = a plastoquinol + NAD(+) + n H(+)(out). The catalysed reaction is a plastoquinone + NADPH + (n+1) H(+)(in) = a plastoquinol + NADP(+) + n H(+)(out). In terms of biological role, NDH shuttles electrons from NAD(P)H:plastoquinone, via FMN and iron-sulfur (Fe-S) centers, to quinones in the photosynthetic chain and possibly in a chloroplast respiratory chain. The immediate electron acceptor for the enzyme in this species is believed to be plastoquinone. Couples the redox reaction to proton translocation, and thus conserves the redox energy in a proton gradient. The sequence is that of NAD(P)H-quinone oxidoreductase subunit I, chloroplastic from Olimarabidopsis pumila (Dwarf rocket).